The sequence spans 516 residues: Probable malate:quinone oxidoreductase (516 aa).

It belongs to the MQO family. FAD is required as a cofactor.

The enzyme catalyses (S)-malate + a quinone = a quinol + oxaloacetate. It participates in carbohydrate metabolism; tricarboxylic acid cycle; oxaloacetate from (S)-malate (quinone route): step 1/1. This Mycobacterium sp. (strain MCS) protein is Probable malate:quinone oxidoreductase.